The primary structure comprises 527 residues: Butyrophilin subfamily 2 member A1 (527 aa).

An N-terminal signal peptide occupies residues 1-28 (MESAAALHFSRPASLLLLLLSLCALVSA). The region spanning 29–141 (QFIVVGPTDP…SYDEAILHLV (113 aa)) is the Ig-like V-type domain. Residues 29-248 (QFIVVGPTDP…SFMPSVSPCA (220 aa)) lie on the Extracellular side of the membrane. Residues Asn-46, Asn-114, and Asn-120 are each glycosylated (N-linked (GlcNAc...) asparagine). An intrachain disulfide couples Cys-51 to Cys-125. Residues 249–269 (VALPIIVVILMIPIAVCIYWI) form a helical membrane-spanning segment. The Cytoplasmic portion of the chain corresponds to 270 to 527 (NKLQKEKKIL…LHRVGTHQSL (258 aa)). Positions 310–506 (VKEKLQEELR…IFICPALTGA (197 aa)) constitute a B30.2/SPRY domain.

Belongs to the immunoglobulin superfamily. BTN/MOG family. In terms of tissue distribution, highly expressed in brain, bone marrow, small intestine, muscle, spleen and pancreas. Moderate expression was seen in lung, liver and kidney.

The protein localises to the membrane. The chain is Butyrophilin subfamily 2 member A1 (BTN2A1) from Homo sapiens (Human).